A 729-amino-acid chain; its full sequence is MQSTSNHLWLLSDILGQGATANVFRGRHKKTGDLFAIKVFNNISFLRPVDVQMREFEVLKKLNHKNIVKLFAIEEETTTRHKVLIMEFCPCGSLYTVLEEPSNAYGLPESEFLIVLRDVVGGMNHLRENGIVHRDIKPGNIMRVIGEDGQSVYKLTDFGAARELEDDEQFVSLYGTEEYLHPDMYERAVLRKDHQKKYGATVDLWSIGVTFYHAATGSLPFRPFEGPRRNKEVMYKIITGKPSGAISGVQKAENGPIDWSGDMPVSCSLSRGLQVLLTPVLANILEADQEKCWGFDQFFAETSDILHRMVIHVFSLQQMTAHKIYIHSYNTATIFHELVYKQTKIISSNQELIYEGRRLVLEPGRLAQHFPKTTEENPIFVVSREPLNTIGLIYEKISLPKVHPRYDLDGDASMAKAITGVVCYACRIASTLLLYQELMRKGIRWLIELIKDDYNETVHKKTEVVITLDFCIRNIEKTVKVYEKLMKINLEAAELGEISDIHTKLLRLSSSQGTIETSLQDIDSRLSPGGSLADAWAHQEGTHPKDRNVEKLQVLLNCMTEIYYQFKKDKAERRLAYNEEQIHKFDKQKLYYHATKAMTHFTDECVKKYEAFLNKSEEWIRKMLHLRKQLLSLTNQCFDIEEEVSKYQEYTNELQETLPQKMFTASSGIKHTMTPIYPSSNTLVEMTLGMKKLKEEMEGVVKELAENNHILERFGSLTMDGGLRNVDCL.

Residues 9–310 (WLLSDILGQG…ETSDILHRMV (302 aa)) enclose the Protein kinase domain. 15-23 (LGQGATANV) is a binding site for ATP. Residue lysine 30 forms a Glycyl lysine isopeptide (Lys-Gly) (interchain with G-Cter in ubiquitin) linkage. Lysine 38 lines the ATP pocket. Aspartate 135 acts as the Proton acceptor in catalysis. Phosphoserine; by autocatalysis and IKKB is present on serine 172. One can recognise a Ubiquitin-like domain in the interval 309–385 (MVIHVFSLQQ…ENPIFVVSRE (77 aa)). A Glycyl lysine isopeptide (Lys-Gly) (interchain with G-Cter in ubiquitin) cross-link involves residue lysine 401. 2 coiled-coil regions span residues 407 to 657 (DLDG…LQET) and 658 to 713 (LPQK…ILER). The residue at position 607 (lysine 607) is an N6-methyllysine; by SETD4. Residues 621–729 (RKMLHLRKQL…DGGLRNVDCL (109 aa)) form an interaction with AZI2, TANK and TBKBP1 region. Lysine 670 is covalently cross-linked (Glycyl lysine isopeptide (Lys-Gly) (interchain with G-Cter in ubiquitin)). Serine 716 is modified (phosphoserine).

The protein belongs to the protein kinase superfamily. Ser/Thr protein kinase family. I-kappa-B kinase subfamily. As to quaternary structure, homodimer. Interacts with DDX3X, TIRAP and TRAF2. Part of a ternary complex consisting of TANK, TRAF2 and TBK1. Interacts with AZI2, TANK and TBKBP1; these interactions are mutually exclusive and mediate TBK1 activation. Interacts with GSK3B; this interaction promotes TBK1 self-association and autophosphorylation. Interacts with SIKE1; SIKE1 is associated with TBK1 under physiological condition and dissociated from TBK1 upon viral infection or TLR3 stimulation. Interacts with IRF3, leading to IRF3 phosphorylation. Interacts with RIGI. Interacts with CYLD. Interacts with OPTN and TRAF3. Interacts with SRC. Interacts with the exocyst complex subunit SEC5/EXOC2; this interaction is sufficient to trigger TBK1 activity. Interacts with STING1, leading to STING1 phosphorylation. Interacts with IFIT3 (via N-terminus). Interacts with MAVS; interaction only takes place in the presence of IFIT3 and leads to MAVS phosphorylation. Interacts (via protein kinase domain) with TTLL12 (via TTL domain); the interaction prevents MAVS binding to TBK1. Interacts with TICAM1; this interaction is enhanced in the presence of WDFY1 and leads to TICAM1 phosphorylation. Interacts with TRIM26. Interacts with TRIM23. Interacts with TTC4 and IKBKE. Interacts with HNRNPA2B1. Interacts with DDX3X. Interacts with TRIM14. Interacts with CEP170; efficient complex formation may be dependent on the presence of CCDC61. Interacts with TRAF3IP3. Interacts with HSP90AA1; the interaction mediates TBK1 association with TOMM70. Interacts with TAX1BP1. Interacts with kinase IKBKB; the complex interacts with STAT1, leading to phosphorylation of STAT1 on 'Thr-749' by IKBKB. Interacts with ICOS; this interaction is critical for the maturation of T follicular regulatory cells. Interacts with RNF144B; this interaction prevents TBK1 phosphorylation and subsequent activation. Interacts with ASB8; this interaction promotes TBK1 proteasomal degradation. Forms a ternary complex with ZNF268 and SETD4; the interaction with SETD4 is ZNF268-dependent and leads to TBK1 monomethylation, which enhances its interaction with IRF3 and MAVS. (Microbial infection) Interacts with Borna disease virus (BDV) P protein leading to its phosphorylation. In terms of assembly, (Microbial infection) Interacts with Ebola virus protein VP35. As to quaternary structure, (Microbial infection) Interacts with HCV NS3; this interaction leads to inhibition of cellular antiviral response by blocking necessary interactions between the TBK1 and its substrates IRF3 and IRF7. (Microbial infection) Interacts with human herpesvirus 1 protein ICP34.5. In terms of assembly, (Microbial infection) Interacts with Zika virus non-structural protein 1/NS1 and non-structural protein 4B/NS4B. As to quaternary structure, (Microbial infection) Interacts with SARS-CoV-2 non-structural protein 6; this interaction decreases IRF3 phosphorylation by 57%, which leads to reduced IFN-beta (IFNB) production. Interacts with SARS-CoV-2 helicase; this interaction inhibits TBK1 phosphorylation and decreases IRF3 phosphorylation by 75%, which leads to reduced IFN-beta production. Interacts with SARS-CoV-2 M protein; the interaction promotes TBK1 degradation via 'Lys-48'-linked ubiquitination. (Microbial infection) Interacts with human cytomegalovirus protein UL35; this interaction inhibits type I interferon production. In terms of assembly, (Microbial infection) Interacts with heartland virus NSs; this interaction antagonizes TBK1 phosphorylation and inhibits TBK1-IRF3 interaction and thus the establishment of an antiviral state. As to quaternary structure, (Microbial infection) Interacts (via N-terminus) with Severe fever with thrombocytopenia virus (SFTSV) NSs; this interaction antagonizes TBK1 phosphorylation and sequesters TBK1 in NSs-induced cytoplasmic inclusion bodies thereby inhibiting the IFN responses. Post-translationally, autophosphorylation at Ser-172 activates the kinase, and is an essential step for virus-triggered signaling. Phosphorylated by IKBKB/IKKB at Ser-172. Phosphorylation requires homodimerization and ubiquitination at Lys-30 and Lys-401. Dephosphorylated at Ser-172 by PPM1B and this negatively regulates its role in mediating antiviral response. In terms of processing, 'Lys-63'-linked polyubiquitination by MIB1 after RNA virus infection, or by NRDP1 after LPS stimulation at Lys-30 and Lys-401, participates in kinase activation. 'Lys-48'-linked polyubiquitination at Lys-670 by DTX4 leads to proteasomal degradation. 'Lys-48'-linked polyubiquitination by TRAIP also leads to proteasomal degradation. 'Lys-48'-linked polyubiquitination by TRAF7; leading to proteasomal degradation. 'Lys-63'-linked polyubiquitination by RNF128 at Lys-30 and Lys-401 leads to the activation of antiviral responses. 'Lys-48'-linked polyubiquitination after 'lys-33'-linked deubiquitination by USP38 promotes TBK1 degradation. (Microbial infection) Interaction with SARS-CoV-2 M protein induces 'Lys-48'-linked ubiquitination which leads to proteasomal degradation. Post-translationally, (Microbial infection) Deubiquitinated by Epstein-Barr virus BPLF1 on both 'Lys-48' and 'Lys-63'-linked ubiquitin chains; leading to inhibition of type I interfewron production. In terms of processing, monomethylation at Lys-607 by SETD4 maximizes TBK1 activation and promotes efficient interferon signaling. In terms of tissue distribution, ubiquitous with higher expression in testis. Expressed in the ganglion cells, nerve fiber layer and microvasculature of the retina.

It localises to the cytoplasm. It catalyses the reaction L-seryl-[protein] + ATP = O-phospho-L-seryl-[protein] + ADP + H(+). The enzyme catalyses L-threonyl-[protein] + ATP = O-phospho-L-threonyl-[protein] + ADP + H(+). In terms of biological role, serine/threonine kinase that plays an essential role in regulating inflammatory responses to foreign agents. Following activation of toll-like receptors by viral or bacterial components, associates with TRAF3 and TANK and phosphorylates interferon regulatory factors (IRFs) IRF3 and IRF7 as well as DDX3X. This activity allows subsequent homodimerization and nuclear translocation of the IRFs leading to transcriptional activation of pro-inflammatory and antiviral genes including IFNA and IFNB. In order to establish such an antiviral state, TBK1 form several different complexes whose composition depends on the type of cell and cellular stimuli. Plays a key role in IRF3 activation: acts by first phosphorylating innate adapter proteins MAVS, STING1 and TICAM1 on their pLxIS motif, leading to recruitment of IRF3, thereby licensing IRF3 for phosphorylation by TBK1. Phosphorylated IRF3 dissociates from the adapter proteins, dimerizes, and then enters the nucleus to induce expression of interferons. Thus, several scaffolding molecules including FADD, TRADD, MAVS, AZI2, TANK or TBKBP1/SINTBAD can be recruited to the TBK1-containing-complexes. Under particular conditions, functions as a NF-kappa-B effector by phosphorylating NF-kappa-B inhibitor alpha/NFKBIA, IKBKB or RELA to translocate NF-Kappa-B to the nucleus. Restricts bacterial proliferation by phosphorylating the autophagy receptor OPTN/Optineurin on 'Ser-177', thus enhancing LC3 binding affinity and antibacterial autophagy. Phosphorylates SMCR8 component of the C9orf72-SMCR8 complex, promoting autophagosome maturation. Phosphorylates ATG8 proteins MAP1LC3C and GABARAPL2, thereby preventing their delipidation and premature removal from nascent autophagosomes. Seems to play a role in energy balance regulation by sustaining a state of chronic, low-grade inflammation in obesity, which leads to a negative impact on insulin sensitivity. Attenuates retroviral budding by phosphorylating the endosomal sorting complex required for transport-I (ESCRT-I) subunit VPS37C. Phosphorylates Borna disease virus (BDV) P protein. Plays an essential role in the TLR3- and IFN-dependent control of herpes virus HSV-1 and HSV-2 infections in the central nervous system. Acts both as a positive and negative regulator of the mTORC1 complex, depending on the context: activates mTORC1 in response to growth factors by catalyzing phosphorylation of MTOR, while it limits the mTORC1 complex by promoting phosphorylation of RPTOR. Acts as a positive regulator of the mTORC2 complex by mediating phosphorylation of MTOR, leading to increased phosphorylation and activation of AKT1. Phosphorylates and activates AKT1. Involved in the regulation of TNF-induced RIPK1-mediated cell death, probably acting via CYLD phosphorylation that in turn controls RIPK1 ubiquitination status. Also participates in the differentiation of T follicular regulatory cells together with the receptor ICOS. The protein is Serine/threonine-protein kinase TBK1 of Homo sapiens (Human).